A 616-amino-acid polypeptide reads, in one-letter code: Chaperone protein HscA (616 aa).

This sequence belongs to the heat shock protein 70 family.

Its function is as follows. Chaperone involved in the maturation of iron-sulfur cluster-containing proteins. Has a low intrinsic ATPase activity which is markedly stimulated by HscB. Involved in the maturation of IscU. This Salmonella paratyphi A (strain ATCC 9150 / SARB42) protein is Chaperone protein HscA.